We begin with the raw amino-acid sequence, 410 residues long: Cysteine desulfurase IscS (410 aa).

Pyridoxal 5'-phosphate-binding positions include A79 to T80, N159, Q187, and S207 to H209. Position 210 is an N6-(pyridoxal phosphate)lysine (K210). T248 contacts pyridoxal 5'-phosphate. Residue C334 is the Cysteine persulfide intermediate of the active site. C334 provides a ligand contact to [2Fe-2S] cluster.

It belongs to the class-V pyridoxal-phosphate-dependent aminotransferase family. NifS/IscS subfamily. In terms of assembly, homodimer. Forms a heterotetramer with IscU, interacts with other sulfur acceptors. Requires pyridoxal 5'-phosphate as cofactor.

The protein resides in the cytoplasm. The catalysed reaction is (sulfur carrier)-H + L-cysteine = (sulfur carrier)-SH + L-alanine. Its pathway is cofactor biosynthesis; iron-sulfur cluster biosynthesis. Master enzyme that delivers sulfur to a number of partners involved in Fe-S cluster assembly, tRNA modification or cofactor biosynthesis. Catalyzes the removal of elemental sulfur atoms from cysteine to produce alanine. Functions as a sulfur delivery protein for Fe-S cluster synthesis onto IscU, an Fe-S scaffold assembly protein, as well as other S acceptor proteins. In Ehrlichia chaffeensis (strain ATCC CRL-10679 / Arkansas), this protein is Cysteine desulfurase IscS.